The primary structure comprises 244 residues: Cobalt transport protein CbiM (244 aa).

A signal peptide spans Met-1–Ala-28. 6 consecutive transmembrane segments (helical) span residues Leu-36–Leu-56, Thr-71–Val-91, Phe-108–Leu-128, Thr-135–Tyr-155, Pro-166–Ile-186, and Gly-208–Leu-228.

This sequence belongs to the CbiM family. In terms of assembly, forms an energy-coupling factor (ECF) transporter complex composed of an ATP-binding protein (A component, CbiO), a transmembrane protein (T component, CbiQ) and 2 possible substrate-capture proteins (S components, CbiM and CbiN) of unknown stoichimetry.

The protein resides in the cell membrane. It participates in cofactor biosynthesis; adenosylcobalamin biosynthesis. Its function is as follows. Part of the energy-coupling factor (ECF) transporter complex CbiMNOQ involved in cobalt import. This Streptococcus sanguinis (strain SK36) protein is Cobalt transport protein CbiM.